We begin with the raw amino-acid sequence, 556 residues long: CDP-diacylglycerol--glycerol-3-phosphate 3-phosphatidyltransferase, mitochondrial (556 aa).

Residues 1–28 (MAVAAAAAAGPVFWRRLLGLLPGRPGLA) constitute a mitochondrion transit peptide. Serine 49 carries the phosphoserine modification. 124–131 (ASLYLGTG) is an ATP binding site. PLD phosphodiesterase domains are found at residues 215 to 241 (TIGLQHIKVYLFDNSVILSGANLSDSY) and 460 to 493 (RGWTFHAKGLWLYLAGSSLPCLTLIGSPNFGYRS). Residues histidine 220, lysine 222, and aspartate 227 contribute to the active site.

Belongs to the CDP-alcohol phosphatidyltransferase class-II family.

The protein resides in the mitochondrion. It carries out the reaction a CDP-1,2-diacyl-sn-glycerol + sn-glycerol 3-phosphate = a 1,2-diacyl-sn-glycero-3-phospho-(1'-sn-glycero-3'-phosphate) + CMP + H(+). Its pathway is phospholipid metabolism; phosphatidylglycerol biosynthesis; phosphatidylglycerol from CDP-diacylglycerol: step 1/2. Activated by calcium and magnesium and inhibited by other bivalent cations. Functionally, functions in the biosynthesis of the anionic phospholipids phosphatidylglycerol and cardiolipin. The polypeptide is CDP-diacylglycerol--glycerol-3-phosphate 3-phosphatidyltransferase, mitochondrial (PGS1) (Homo sapiens (Human)).